The following is a 455-amino-acid chain: P2X purinoceptor 5 (455 aa).

The Cytoplasmic segment spans residues 1–30 (MGQAAWKGFVLSLFDYKTAKFVVAKSKKVG). The chain crosses the membrane as a helical span at residues 31–50 (LLYRVLQLTILLYLLIWVFL). The Extracellular segment spans residues 51 to 339 (IKKSYQDIDT…KFSIIPTVIN (289 aa)). 69–71 (KVK) serves as a coordination point for ATP. Asn77 carries an N-linked (GlcNAc...) asparagine glycan. Disulfide bonds link Cys118/Cys169, Cys129/Cys152, and Cys135/Cys163. Asn157 is a glycosylation site (N-linked (GlcNAc...) asparagine). Thr189 contacts ATP. Asn202 carries N-linked (GlcNAc...) asparagine glycosylation. Cystine bridges form between Cys220-Cys229 and Cys263-Cys272. ATP-binding positions include 294 to 296 (NFR) and Lys314. Residues 340–362 (IGSGLALMGAGAFFCDLVLIYLI) form a helical membrane-spanning segment. Residues 363–455 (RKSEFYRDKK…PSQILQTVKT (93 aa)) lie on the Cytoplasmic side of the membrane.

It belongs to the P2X receptor family. Functional P2XRs are organized as homomeric and heteromeric trimers. Homotrimer. Forms heterotrimer with P2RX1. As to expression, expressed in a number of tissues, with highest levels detected in heart and kidney.

The protein localises to the cell membrane. The enzyme catalyses Na(+)(in) = Na(+)(out). The catalysed reaction is Ca(2+)(in) = Ca(2+)(out). It carries out the reaction chloride(in) = chloride(out). Its activity is regulated as follows. Activated by ATP. Slowly desensitizing. Not activated by ATP agonist alpha/beta-methylene-ATP. Highly sensitive to the antagonists suramin and PPADS. Functionally, ATP-gated nonselective transmembrane cation channel permeable to potassium, sodium and calcium. Unlike other P2RX receptors, the P2X5 receptor is also permeable to chloride. Acts as an important regulator of inflammatory-related bone loss and osteoclast multinucleation. In Mus musculus (Mouse), this protein is P2X purinoceptor 5.